A 120-amino-acid polypeptide reads, in one-letter code: Large ribosomal subunit protein bL20c (120 aa).

Belongs to the bacterial ribosomal protein bL20 family.

It is found in the plastid. In terms of biological role, binds directly to 23S ribosomal RNA and is necessary for the in vitro assembly process of the 50S ribosomal subunit. It is not involved in the protein synthesizing functions of that subunit. The protein is Large ribosomal subunit protein bL20c of Cuscuta obtusiflora (Peruvian dodder).